The chain runs to 569 residues: Proline--tRNA ligase (569 aa).

Belongs to the class-II aminoacyl-tRNA synthetase family. ProS type 1 subfamily. In terms of assembly, homodimer.

It localises to the cytoplasm. It catalyses the reaction tRNA(Pro) + L-proline + ATP = L-prolyl-tRNA(Pro) + AMP + diphosphate. In terms of biological role, catalyzes the attachment of proline to tRNA(Pro) in a two-step reaction: proline is first activated by ATP to form Pro-AMP and then transferred to the acceptor end of tRNA(Pro). As ProRS can inadvertently accommodate and process non-cognate amino acids such as alanine and cysteine, to avoid such errors it has two additional distinct editing activities against alanine. One activity is designated as 'pretransfer' editing and involves the tRNA(Pro)-independent hydrolysis of activated Ala-AMP. The other activity is designated 'posttransfer' editing and involves deacylation of mischarged Ala-tRNA(Pro). The misacylated Cys-tRNA(Pro) is not edited by ProRS. This chain is Proline--tRNA ligase, found in Campylobacter jejuni subsp. jejuni serotype O:23/36 (strain 81-176).